Here is a 415-residue protein sequence, read N- to C-terminus: MKLLELFIASSKPVVETLLITSVGFYLALDTVNLLGHDARKHLNNIVFYVFSPSLIGSRLADSVTYESLVKMWFMPVNVLLTFMIGSLLGWIVIVITKPPSQLRGLIISCCASGNLGTMPLIIIPAICKEKGGPFGDSESCEKYGMGYVTLSMTAFFISVYKHDTNWYVSGGNGLLMDLYINLMRVLSNSPVETHTHSIESNYDDSCKVQLISSKEEEKEEDNHQVGRWEEVKQRVVSLSKKVNLGSIFAPATIAAIIALVIGLITPLRNLIIGTVAPFRVIQDSLTLLGDGAIPAMTLILGGNLLKGMRRSEVRSSEMKNSCIIGVLVARYILLPVSGVLLVRGAYKLDLVTSEPLYQFVLLLQYAVPPAMNLGTKTQLFGAGESECSVIMLWTYSLAAVSLTVWPTFFMWLVT.

Over 1–13 (MKLLELFIASSKP) the chain is Lumenal. Residues 14-34 (VVETLLITSVGFYLALDTVNL) form a helical membrane-spanning segment. The Cytoplasmic portion of the chain corresponds to 35–44 (LGHDARKHLN). The helical transmembrane segment at 45-61 (NIVFYVFSPSLIGSRLA) threads the bilayer. Over 62–75 (DSVTYESLVKMWFM) the chain is Lumenal. A helical transmembrane segment spans residues 76-96 (PVNVLLTFMIGSLLGWIVIVI). Topologically, residues 97-106 (TKPPSQLRGL) are cytoplasmic. The chain crosses the membrane as a helical span at residues 107–127 (IISCCASGNLGTMPLIIIPAI). Residues 128–143 (CKEKGGPFGDSESCEK) lie on the Lumenal side of the membrane. The chain crosses the membrane as a helical span at residues 144–161 (YGMGYVTLSMTAFFISVY). The Cytoplasmic segment spans residues 162-244 (KHDTNWYVSG…RVVSLSKKVN (83 aa)). The helical transmembrane segment at 245–265 (LGSIFAPATIAAIIALVIGLI) threads the bilayer. Topologically, residues 266–285 (TPLRNLIIGTVAPFRVIQDS) are lumenal. Residues 286 to 306 (LTLLGDGAIPAMTLILGGNLL) traverse the membrane as a helical segment. Over 307–322 (KGMRRSEVRSSEMKNS) the chain is Cytoplasmic. Residues 323 to 343 (CIIGVLVARYILLPVSGVLLV) form a helical membrane-spanning segment. Topologically, residues 344-355 (RGAYKLDLVTSE) are lumenal. The helical transmembrane segment at 356-376 (PLYQFVLLLQYAVPPAMNLGT) threads the bilayer. Residues 377–389 (KTQLFGAGESECS) lie on the Cytoplasmic side of the membrane. Residues 390-410 (VIMLWTYSLAAVSLTVWPTFF) form a helical membrane-spanning segment. Residues 411–415 (MWLVT) lie on the Lumenal side of the membrane.

Belongs to the auxin efflux carrier (TC 2.A.69.2) family. In terms of tissue distribution, expressed in seedlings, rosette and cauline leaves, stems, flowers and siliques.

The protein localises to the endoplasmic reticulum membrane. In terms of biological role, involved in cellular auxin homeostasis by regulating auxin metabolism. Regulates intracellular auxin accumulation at the endoplasmic reticulum and thus auxin availability for nuclear auxin signaling. In Arabidopsis thaliana (Mouse-ear cress), this protein is Protein PIN-LIKES 4.